Consider the following 395-residue polypeptide: MKSLCLLAIVAVVSAEVYFKEEFNDASWEKRWVQSKHKDDFGAFKLSAGKFFDVESRDQGIQTSQDAKFYSRAAKFDKDFSNKGKTLVIQYTVKHEQGIDCGGGYVKVMRADADLGDFHGETPYNVMFGPDICGPTRRVHVILNYKGENKLIKKEITCKSDELTHLYTLILNSDNTYEVKIDGESAQTGSLEEDWDLLPAKKIKDPDAKKPEDWDEREYIDDAEDAKPEDWEKPEHIPDPDAKKPEDWDDEMDGEWEPPMIDNPEYKGEWKPKQIKNPAYKGKWIHPEIENPEYTPDDELYSYESWGAIGFDLWQVKSGTIFDNIIITDSVEEAEAHAAETFDKLKTVEKEKKEKADEETRKAEEEARKKAEEEKEAKKDDDEEEKEEEEGHDEL.

An N-terminal signal peptide occupies residues 1 to 15 (MKSLCLLAIVAVVSA). C101 and C133 form a disulfide bridge. The an alpha-D-glucoside site is built by Y105, K107, Y124, and D131. Tandem repeats lie at residues 186–197 (AQTGSLEEDWDL), 205–216 (DPDAKKPEDWDE), 222–233 (DAEDAKPEDWEK), 239–250 (DPDAKKPEDWDD), 254–264 (GEWEPPMIDNP), 268–278 (GEWKPKQIKNP), and 282–292 (GKWIHPEIENP). The segment at 186–250 (AQTGSLEEDW…DAKKPEDWDD (65 aa)) is 4 X approximate repeats. The interval 193–301 (EDWDLLPAKK…PEYTPDDELY (109 aa)) is P-domain. Residues 202 to 212 (KIKDPDAKKPE) show a composition bias toward basic and acidic residues. Residues 202-255 (KIKDPDAKKPEDWDEREYIDDAEDAKPEDWEKPEHIPDPDAKKPEDWDDEMDGE) are disordered. The span at 213 to 224 (DWDEREYIDDAE) shows a compositional bias: acidic residues. A compositionally biased stretch (basic and acidic residues) spans 225-246 (DAKPEDWEKPEHIPDPDAKKPE). A 3 X approximate repeats region spans residues 254-292 (GEWEPPMIDNPEYKGEWKPKQIKNPAYKGKWIHPEIENP). Positions 302–395 (SYESWGAIGF…KEEEEGHDEL (94 aa)) are C-domain. D312 is an an alpha-D-glucoside binding site. Residues 340–380 (ETFDKLKTVEKEKKEKADEETRKAEEEARKKAEEEKEAKKD) show a composition bias toward basic and acidic residues. Residues 340–395 (ETFDKLKTVEKEKKEKADEETRKAEEEARKKAEEEKEAKKDDDEEEKEEEEGHDEL) form a disordered region. Residues 381–395 (DDEEEKEEEEGHDEL) are compositionally biased toward acidic residues. A Prevents secretion from ER motif is present at residues 392-395 (HDEL).

It belongs to the calreticulin family. Post-translationally, cleaved by caspase ced-3 in vitro.

It is found in the endoplasmic reticulum lumen. Molecular calcium-binding chaperone promoting folding, oligomeric assembly and quality control in the endoplasmic reticulum (ER) via the calreticulin/calnexin cycle. This lectin may interact transiently with almost all of the monoglucosylated glycoproteins that are synthesized in the ER. Probably by controlling the folding of extracellular matrix protein unc-52/Perlecan, may play a role in the formation of fibrous organelles, a hemidesmosome-like structure attaching muscles to the epidermis. Protects dopaminergic neurons against oxidative stress-induced neurodegeneration. May play a role in protection against ER stress. Plays a role in modulating lifespan, acting by influencing ER calcium homeostasis. The polypeptide is Calreticulin (crt-1) (Caenorhabditis elegans).